The following is a 133-amino-acid chain: Small ribosomal subunit protein uS8 (133 aa).

It belongs to the universal ribosomal protein uS8 family. As to quaternary structure, part of the 30S ribosomal subunit. Contacts proteins S5 and S12.

Its function is as follows. One of the primary rRNA binding proteins, it binds directly to 16S rRNA central domain where it helps coordinate assembly of the platform of the 30S subunit. This Synechococcus sp. (strain RCC307) protein is Small ribosomal subunit protein uS8.